Here is a 257-residue protein sequence, read N- to C-terminus: LexA repressor (257 aa).

A DNA-binding region (H-T-H motif) is located at residues 64–84 (FREIGEAAGLKSPSSVKHQLQ). Catalysis depends on for autocatalytic cleavage activity residues serine 181 and lysine 218.

This sequence belongs to the peptidase S24 family. In terms of assembly, homodimer.

It catalyses the reaction Hydrolysis of Ala-|-Gly bond in repressor LexA.. Represses a number of genes involved in the response to DNA damage (SOS response), including recA and lexA. In the presence of single-stranded DNA, RecA interacts with LexA causing an autocatalytic cleavage which disrupts the DNA-binding part of LexA, leading to derepression of the SOS regulon and eventually DNA repair. This Bifidobacterium adolescentis (strain ATCC 15703 / DSM 20083 / NCTC 11814 / E194a) protein is LexA repressor.